The following is a 386-amino-acid chain: Lycopene beta-cyclase (386 aa).

NAD(+) is bound at residue 4 to 34 (DVLLAGAGLANGLIALALRAARPDLRVLLLD).

It belongs to the lycopene cyclase family. FAD is required as a cofactor.

The catalysed reaction is a carotenoid psi-end group = a carotenoid beta-end derivative. The enzyme catalyses all-trans-lycopene = gamma-carotene. It catalyses the reaction gamma-carotene = all-trans-beta-carotene. Its pathway is carotenoid biosynthesis; astaxanthin biosynthesis. Functionally, catalyzes the double cyclization reaction which converts lycopene to beta-carotene. The sequence is that of Lycopene beta-cyclase from Paracoccus sp. (strain N81106 / MBIC 01143) (Agrobacterium aurantiacum).